A 188-amino-acid chain; its full sequence is Small ribosomal subunit protein bS18c (188 aa).

Positions 1 to 19 (MNNQSFNNFSQVNSNSSFF) are enriched in low complexity. The tract at residues 1 to 79 (MNNQSFNNFS…TSNKRKVLSV (79 aa)) is disordered. Polar residues predominate over residues 25-71 (NLQNTNLEMTNGTNPPSSFSKQTPQKRQSFGTNTNFSKGNSSRGSTS).

The protein belongs to the bacterial ribosomal protein bS18 family. As to quaternary structure, part of the 30S ribosomal subunit.

The protein resides in the plastid. It is found in the chloroplast. The protein is Small ribosomal subunit protein bS18c of Tetradesmus obliquus (Green alga).